Consider the following 394-residue polypeptide: Tubby-like F-box protein 2 (394 aa).

The interval 21–44 (SKRSWSKSSHIAPDQTTPPLDNIP) is disordered. Residues 26–44 (SKSSHIAPDQTTPPLDNIP) are compositionally biased toward polar residues. The F-box domain maps to 46 to 101 (SPWASLPPELLHDIIWRVEESETAWPARAAVVSCASVCKSWRGITMEIVRIPEQCG). Disordered stretches follow at residues 200–225 (ASST…PTNS) and 268–297 (IEEE…PSLR).

This sequence belongs to the TUB family. In terms of tissue distribution, ubiquitous.

The chain is Tubby-like F-box protein 2 from Arabidopsis thaliana (Mouse-ear cress).